The chain runs to 113 residues: U10-theraphotoxin-Hs2a (113 aa).

The first 21 residues, 1–21 (MNTVRVTFLLVFVLAVSLGQA), serve as a signal peptide directing secretion. Positions 22 to 67 (DEDGNRMEKRQKKTEAENLLLPKLEELDAKLWEEDSVESRNSRQKR) are excised as a propeptide. Disulfide bonds link cysteine 68/cysteine 86, cysteine 75/cysteine 91, and cysteine 85/cysteine 106.

This sequence belongs to the neurotoxin 14 (magi-1) family. 02 (HWTX-XVIc) subfamily. In terms of tissue distribution, expressed by the venom gland.

It is found in the secreted. In terms of biological role, probable ion channel inhibitor. The sequence is that of U10-theraphotoxin-Hs2a from Cyriopagopus schmidti (Chinese bird spider).